The sequence spans 403 residues: uncharacterized protein (403 aa).

Helical transmembrane passes span 31–51, 186–206, 238–258, 268–288, 303–323, and 355–375; these read FLIA…IGSF, LPIG…GIIV, ISAV…PIII, LAIF…SLLC, LISP…TIMV, and LIEI…SFIL.

This sequence to B.subtilis YhaP.

It localises to the cell membrane. This is an uncharacterized protein from Methanocaldococcus jannaschii (strain ATCC 43067 / DSM 2661 / JAL-1 / JCM 10045 / NBRC 100440) (Methanococcus jannaschii).